The primary structure comprises 79 residues: Delta-hormotoxin-Cpt1a (79 aa).

Residues 1–20 (MKTQVLAVFVLCVLFCLAES) form the signal peptide. Residues 21–31 (RTTLNKRIDIA) constitute a propeptide that is removed on maturation. 3 disulfide bridges follow: Cys-36-Cys-75, Cys-38-Cys-66, and Cys-56-Cys-76.

It belongs to the sea anemone sodium channel inhibitory toxin family.

The protein localises to the secreted. Its subcellular location is the nematocyst. Its function is as follows. In neuromuscular preparation of crustaceans, the toxin increased neurotransmitter release, causing repetitive firing of the axons. May affect sodium channels (Nav). This is Delta-hormotoxin-Cpt1a from Calliactis parasitica (Sea anemone).